We begin with the raw amino-acid sequence, 246 residues long: Carboxylesterase (246 aa).

Ser93 acts as the Nucleophile in catalysis. Residues Asp192 and His222 each act as charge relay system in the active site.

The protein belongs to the lipase/esterase LIP3/BchO family. In terms of assembly, homodimer.

The catalysed reaction is a carboxylic ester + H2O = an alcohol + a carboxylate + H(+). Its function is as follows. Involved in the detoxification of xenobiotics. Shows maximal activity with C6 substrates, with gradually decreasing activity from C8 to C12 substrates. No activity for higher chain length substrates acids rather than long-chain ones. The chain is Carboxylesterase (est) from Bacillus subtilis (strain 168).